Reading from the N-terminus, the 351-residue chain is uncharacterized protein (351 aa).

5 residues coordinate Mn(2+): Asp215, Asp226, His290, Glu319, and Glu333.

The protein belongs to the peptidase M24B family. Mn(2+) is required as a cofactor.

This is an uncharacterized protein from Staphylococcus aureus (strain bovine RF122 / ET3-1).